The chain runs to 152 residues: 6,7-dimethyl-8-ribityllumazine synthase (152 aa).

Residues Phe22, 56–58 (AFE), and 79–81 (AVI) each bind 5-amino-6-(D-ribitylamino)uracil. A (2S)-2-hydroxy-3-oxobutyl phosphate-binding site is contributed by 84-85 (AT). The Proton donor role is filled by His87. A 5-amino-6-(D-ribitylamino)uracil-binding site is contributed by Phe112. Arg126 contacts (2S)-2-hydroxy-3-oxobutyl phosphate.

It belongs to the DMRL synthase family.

It carries out the reaction (2S)-2-hydroxy-3-oxobutyl phosphate + 5-amino-6-(D-ribitylamino)uracil = 6,7-dimethyl-8-(1-D-ribityl)lumazine + phosphate + 2 H2O + H(+). It functions in the pathway cofactor biosynthesis; riboflavin biosynthesis; riboflavin from 2-hydroxy-3-oxobutyl phosphate and 5-amino-6-(D-ribitylamino)uracil: step 1/2. Functionally, catalyzes the formation of 6,7-dimethyl-8-ribityllumazine by condensation of 5-amino-6-(D-ribitylamino)uracil with 3,4-dihydroxy-2-butanone 4-phosphate. This is the penultimate step in the biosynthesis of riboflavin. This is 6,7-dimethyl-8-ribityllumazine synthase from Carboxydothermus hydrogenoformans (strain ATCC BAA-161 / DSM 6008 / Z-2901).